The following is a 154-amino-acid chain: Endoribonuclease YbeY (154 aa).

Residues histidine 120, histidine 124, and histidine 130 each coordinate Zn(2+).

It belongs to the endoribonuclease YbeY family. Requires Zn(2+) as cofactor.

It localises to the cytoplasm. Its function is as follows. Single strand-specific metallo-endoribonuclease involved in late-stage 70S ribosome quality control and in maturation of the 3' terminus of the 16S rRNA. The chain is Endoribonuclease YbeY from Leptospira biflexa serovar Patoc (strain Patoc 1 / Ames).